We begin with the raw amino-acid sequence, 420 residues long: MAP kinase-interacting serine/threonine-protein kinase 1 (420 aa).

The tract at residues 1–25 is disordered; that stretch reads MGSSEPIPIAESDKRKKKKRKARAT. Ser-27 carries the phosphoserine; by PAK2 modification. The 285-residue stretch at 37–321 folds into the Protein kinase domain; sequence KLTSELLGEG…AAQVLQHPWV (285 aa). ATP contacts are provided by residues 43 to 51 and Lys-66; that span reads LGEGANAKV. Asp-158 (proton acceptor) is an active-site residue. Phosphoserine occurs at positions 168 and 173. A phosphothreonine mark is found at Thr-197, Thr-202, and Thr-332. The disordered stretch occupies residues 386-420; it reads LSPPSKSRLARRRALAQAGRSGDAPPSPTPTTPAP. Residues 400–409 are compositionally biased toward low complexity; it reads LAQAGRSGDA. Residues 410–420 show a composition bias toward pro residues; that stretch reads PPSPTPTTPAP.

It belongs to the protein kinase superfamily. CAMK Ser/Thr protein kinase family. Interacts with the C-terminal regions of EIF4G1 and EIF4G2. Also binds to dephosphorylated ERK1 and ERK2, and to the p38 kinases. The cofactor is Mg(2+). In terms of processing, dual phosphorylation of Thr-197 and Thr-202 activates the kinase. Phosphorylation of Thr-332 activates the kinase. MAPK3/ERK1 is one of the kinases which activate MKNK1/MNK1. Phosphorylation by PAK2 leads to a reduced phosphorylation of EIF4G1.

It catalyses the reaction L-seryl-[protein] + ATP = O-phospho-L-seryl-[protein] + ADP + H(+). It carries out the reaction L-threonyl-[protein] + ATP = O-phospho-L-threonyl-[protein] + ADP + H(+). With respect to regulation, phosphorylated and activated by the p38 kinases and kinases in the Erk pathway. May play a role in the response to environmental stress and cytokines. Appears to regulate translation by phosphorylating EIF4E, thus increasing the affinity of this protein for the 7-methylguanosine-containing mRNA cap. This chain is MAP kinase-interacting serine/threonine-protein kinase 1 (MKNK1), found in Bos taurus (Bovine).